The following is a 105-amino-acid chain: Met repressor (105 aa).

Belongs to the MetJ family. As to quaternary structure, homodimer.

The protein localises to the cytoplasm. In terms of biological role, this regulatory protein, when combined with SAM (S-adenosylmethionine) represses the expression of the methionine regulon and of enzymes involved in SAM synthesis. This is Met repressor from Serratia proteamaculans (strain 568).